Consider the following 132-residue polypeptide: MTSSLALVLVFGGAAVCAELALRGGYRERSNQDDPEYLELAHYATSTWSAQQPGKTHFDTVVEVLKVETQTVAGTNYRLTLKVAESTCELTSTYNKDTCQANANAAQRTCTTVIYRNLQGEKSISSFECAAA.

An N-terminal signal peptide occupies residues 1 to 18; the sequence is MTSSLALVLVFGGAAVCA. The 90-residue stretch at 28-117 folds into the Cystatin domain; that stretch reads ERSNQDDPEY…RTCTTVIYRN (90 aa). The tract at residues 87–131 is required for interaction with mouse ANXA2; that stretch reads TCELTSTYNKDTCQANANAAQRTCTTVIYRNLQGEKSISSFECAA. 2 disulfide bridges follow: C88–C99 and C110–C129.

It belongs to the cystatin family. As to quaternary structure, monomer. Interacts (via loop 2) with mouse ANXA2; the interaction results in reduced activation of mouse NLRC4 inflammasome formation upon Anaplasma phagocytophilum infection. Detected in salivary gland and midgut.

Its subcellular location is the secreted. Contributes to the suppression of the host's immune response to tick salivary proteins and is important for successful feeding on hosts. Inhibitor of cysteine proteinases. Inhibits host immune responses, probably via its inhibition of host cathepsins. Inhibits host papain (in vitro). Inhibits host cathepsin L (CTSL) (in vitro). Inhibits host cathepsin L2 (CTSV) (in vitro). Attenuates IFN-beta (IFNB1)-triggered JAK/STAT signaling pathway in mouse dendritic cells. Suppresses induction of interferon-stimulated gene IRF7 and production of CXCL10 in lipopolysaccharide (LPS)-activated dendritic cells. Functionally, (Microbial infection) Down-regulates TLR2-mediated host responses to infection by Borrelia burgdorferi and the production of chemokines CCL3 and CXCL10 by host dendritic cells. Enhances infection by the tick-transmitted pathogen B.burgdorferi (in vitro). In terms of biological role, (Microbial infection) Inhibits host inflammatory responses to Anaplasma phagocytophilum infection. Interacts with mouse ANXA2 and suppresses oligomerization of NLRC4, a key component of host inflammasomes that sense A.phagocytophilum infection. Indirectly targets caspase-1 (CASP1) activation and subsequent IL-1beta (IL1B) and IL18 release by inhibiting reactive oxygen species (ROS) production from NADPH oxidase complex in A.phagocytophilum-infected mouse macrophages. Its function is as follows. (Microbial infection) Promotes replication of tick-borne encephalitis virus in mouse dendritic cells and reduces anti-viral effect of host IFN-beta (IFNB1). The polypeptide is Salivary cystatin-L2 (Ixodes scapularis (Black-legged tick)).